The sequence spans 1836 residues: MINKNKVTERSGIHDTVKSLSENLRKYIEAQYHIRDEGLIAERRALLQQNETIAQAPYIEATPIYEPGAPYSELPIPEAASNVLTQLSELGIGLYQRPYKHQSQALESFLGEDASDLVIATGTGSGKTESFLMPIIGKLAIESSERPKSASLPGCRAILLYPMNALVNDQLARIRRLFGDSEASKILRSGRCAPVRFGAYTGRTPYPGRRSSRRDELFIKPLFDEFYNKLANNAPVRAELNRIGRWPSKDLDAFYGQSASQAKTYVSGKKTGKQFVLNNWGERLITQPEDRELMTRHEMQNRCPELLITNYSMLEYMLMRPIERNIFEQTKEWLKADEMNELILVLDEAHMYRGAGGAEVALLIRRLCARLDIPRERMRCILTSASLGSIEDGERFAQDLTGLSPTSSRKFRIIEGTRESRPESQIVTSKEANALAEFDLNSFQCVAEDLESAYAAIESLAERMGWQKPMIKDHSTLRNWLFDNLTGFGPIETLIEIVSGKAVKLNILSENLFPDSPQQIAERATDALLALGCYAQRASDGRVLIPTRMHLFYRGLPGLYACIDPDCNQRLGNHSGPTILGRLYTKPLDQCKCASKGRVYELFTHRDCGAAFIRGYVSSEMDFVWHQPNGPLSEDEDIDLVPIDILVEETPHVHSDYQDRWLHIATGRLSKQCQDEDSGYRKVFIPDRVKSGSEITFDECPVCMRKTRSAQNEPSKIMDHVTKGEAPFTTLVRTQISHQPASRPIDGKHPNGGKKVLIFSDGRQKAARLARDIPRDIELDLFRQSIALACSKLKDINREPKPTSVLYLAFLSVLSEHDLLIFDGEDSRKVVMARDEFYRDYNSDLAQAFDDNFSPQESPSRYKIALLKLLCSNYYSLSGTTVGFVEPSQLKSKKMWEDVQSKKLNIESKDVHALAVAWIDTLLTEFAFDESIDSTLRIKAAGFYKPTWGSQGRFGKALRKTLIQHPAMGELYVEVLEEIFRTHLTLGKDGVYFLAPNALRLKIDLLHVWKQCNDCTALMPFALEHSTCLACGSNSVKTVEPSESSYINARKGFWRSPVEEVLVSNSRLLNLSVEEHTAQLSHRDRASVHATTELYELRFQDVLINDNDKPIDVLSCTTTMEVGVDIGSLVAVALRNVPPQRENYQQRAGRAGRRGASVSTVVTYSQNGPHDSYYFLNPERIVAGSPRTPEVKVNNPKIARRHVHSFLVQTFFHELMEQGIYNPTEKTAILEKALGTTRDFFHGAKDTGLNLDSFNNWVKNRILSTNGDLRTSVAAWLPPVLETGGLSASDWFAKVAEEFLNTLHGLAEIVPQIAALVDEENEDDEQTSGGMKFAQEELLEFLFYHGLLPSYAFPTSLCSFLVEKIVKNIRGSFEVRTVQQPQQSISQALSEYAPGRLIVIDRKTYRSGGVFSNALKGELNRARKLFNNPKKFIHCDKCSFVRDPHNNQNSENTCPICGGILKVEIMIQPEVFGPENAKELNEDDREQEITYVTAAQYPQPVDPEDFKFNNGGAHIVFTHAIDQKLVTVNRGKNEGGSSGFSVCCECGAASVYDSYSPAKGAHERPYKYIATKETPRLCSGEYKRVFLGHDFRTDLLLLRITVGSPLVTDTSNAIVLRMYEDALYTIAEALRLAASRHKQLDLDPAEFGSGFRILPTIEEDTQALDLFLYDTLSGGAGYAEVAAANLDDILTATLALLEGCECDTSCTDCLNHFHNQHIQSRLDRKLGASLLRYALYGMVPRCASPDIQVEKLSQLRASLELDGFQCLIKGTQEAPMIVSLNDRSVAVGSYPGLIDRPDFQHDVYKSKNTNAHIAFNEYLLRSNLPQAHQNIRKLLR.

The Helicase ATP-binding domain maps to 108-405 (SFLGEDASDL…FAQDLTGLSP (298 aa)). 121–128 (TGTGSGKT) provides a ligand contact to ATP. The DEAH box motif lies at 347–350 (DEAH). Positions 1014-1199 (DCTALMPFAL…EVKVNNPKIA (186 aa)) constitute a Helicase C-terminal domain.

Its subcellular location is the cytoplasm. Functionally, component of antiviral defense system Druantia type I, composed of DruA, DruB, DruC, DruD and DruE. Expression of Druantia in E.coli (strain MG1655) confers resistance to phage lambda, SECphi18, SECphi27 and T4. This protein is probably a helicase. In Escherichia coli (strain UMEA 4076-1), this protein is Druantia protein DruE.